Reading from the N-terminus, the 447-residue chain is MLHRYLPMTEEDKKEMLETIGVQTIDELFSDIPESVRFKGDLKIKQAKSEPELLKELSGLARKNANLKEYASFLGAGVYDHYAPVIVDHVLSRSEFYTAYTPYQPEISQGELQAIFEFQTMICELTGMDVANSSMYDGGTALAEAAMLAAGHTRKKKILVSKAVHPESRAVLETYAKGQHLEVVEIDHKDGVTNLDGLQSEMDDTVACVIVQYPNFFGQIEKLADIEKIVHEQKALFIVSSNPLSLGVLTPPGKFGADIVIGDAQPFGIPTQFGGPHCGYFATTKAFMRKIPGRLVGQTVDTEGKRGFVLTLQAREQHIRRDKATSNICSNQALNALAASVAMTALGKRGVKEMARQNISKAQYAKRQFEEKGFKVVFTGPFFNEFVVDCKRPVKEINDTLLQKGIIGGYDLGRDDEKLVNHMLVAVTELRTKAEIDTLVNEMGAIQ.

The protein belongs to the GcvP family. N-terminal subunit subfamily. As to quaternary structure, the glycine cleavage system is composed of four proteins: P, T, L and H. In this organism, the P 'protein' is a heterodimer of two subunits.

It catalyses the reaction N(6)-[(R)-lipoyl]-L-lysyl-[glycine-cleavage complex H protein] + glycine + H(+) = N(6)-[(R)-S(8)-aminomethyldihydrolipoyl]-L-lysyl-[glycine-cleavage complex H protein] + CO2. Functionally, the glycine cleavage system catalyzes the degradation of glycine. The P protein binds the alpha-amino group of glycine through its pyridoxal phosphate cofactor; CO(2) is released and the remaining methylamine moiety is then transferred to the lipoamide cofactor of the H protein. The polypeptide is Probable glycine dehydrogenase (decarboxylating) subunit 1 (Bacillus cytotoxicus (strain DSM 22905 / CIP 110041 / 391-98 / NVH 391-98)).